A 260-amino-acid chain; its full sequence is Sodium channel modifier 1 (260 aa).

Residues 4–20 (KRDGDDSSQLNVLKKRR) carry the Bipartite nuclear localization signal motif. The Matrin-type zinc-finger motif lies at 42-74 (YACTVCHHRPVFNTIDMLSVHRTGKKHLGGLQR). The tract at residues 143-260 (RNVYDPHSGP…EEEPPALPPS (118 aa)) is disordered. Positions 166–187 (PGPSQPHTSLHSPPTGPCSSPT) are enriched in polar residues. Positions 202–221 (KGEEKFRKEIADPERERNME) are enriched in basic and acidic residues. Acidic residues predominate over residues 245–254 (VEFDSDEEEP).

Component of the minor spliceosome, which splices U12-type introns.

The protein resides in the nucleus. Its subcellular location is the nucleoplasm. The protein localises to the nucleus speckle. Functionally, as a component of the minor spliceosome, involved in the splicing of U12-type introns in pre-mRNAs. The sequence is that of Sodium channel modifier 1 (scnm1) from Xenopus laevis (African clawed frog).